A 263-amino-acid polypeptide reads, in one-letter code: MDYRWIQMKVITFSIAKGGTGKTIITANAAAALAKKGKKILLIDGDVGSKSLSHLLNVKSNIFLADIIEEERPIKDAIVNTPIENIELLAVGKSLADYLKFDINILKRFKELGDYDYVFIDAPSTSSGVETYLALGLSDYFIPVLDYTAFGPSLQGAINTIVIGKNYLESTPAGFIINKAEDLPESVINDIKKILGLECISIIHKNSLVEQSYAKKEIVYLTSSDKKFVEEIDKIVDALEKLKEVKERDIPKVIEKIKESTLL.

16–23 (AKGGTGKT) contacts ATP.

The protein to M.jannaschii MJ0547 and MJ0169.

This is an uncharacterized protein from Methanocaldococcus jannaschii (strain ATCC 43067 / DSM 2661 / JAL-1 / JCM 10045 / NBRC 100440) (Methanococcus jannaschii).